The following is a 173-amino-acid chain: Co-chaperone protein HscB (173 aa).

The J domain maps to 2-74; the sequence is DYFTLFGLPA…LKRAEYMLSL (73 aa).

It belongs to the HscB family. As to quaternary structure, interacts with HscA and stimulates its ATPase activity. Interacts with IscU.

Functionally, co-chaperone involved in the maturation of iron-sulfur cluster-containing proteins. Seems to help targeting proteins to be folded toward HscA. In Photorhabdus laumondii subsp. laumondii (strain DSM 15139 / CIP 105565 / TT01) (Photorhabdus luminescens subsp. laumondii), this protein is Co-chaperone protein HscB.